We begin with the raw amino-acid sequence, 177 residues long: Interleukin-1 receptor antagonist protein (177 aa).

Positions 1 to 25 (MEVCRCHHGYLISLLLFLFHSETAC) are cleaved as a signal peptide. The cysteines at positions 91 and 141 are disulfide-linked. N-linked (GlcNAc...) asparagine glycosylation is found at Asn-109 and Asn-114.

Belongs to the IL-1 family.

It localises to the secreted. Anti-inflammatory antagonist of interleukin-1 family of proinflammatory cytokines such as interleukin-1beta/IL1B and interleukin-1alpha/IL1A. Protects from immune dysregulation and uncontrolled systemic inflammation triggered by IL1 for a range of innate stimulatory agents such as pathogens. This is Interleukin-1 receptor antagonist protein (IL1RN) from Tursiops truncatus (Atlantic bottle-nosed dolphin).